A 230-amino-acid chain; its full sequence is Fibrillarin-like rRNA/tRNA 2'-O-methyltransferase (230 aa).

S-adenosyl-L-methionine contacts are provided by residues 89-90, 107-108, 132-133, and 152-155; these read TT, EV, DA, and DISQ.

This sequence belongs to the methyltransferase superfamily. Fibrillarin family. As to quaternary structure, interacts with nop5. Component of box C/D small ribonucleoprotein (sRNP) particles that contain rpl7ae, FlpA and nop5, plus a guide RNA.

Involved in pre-rRNA and tRNA processing. Utilizes the methyl donor S-adenosyl-L-methionine to catalyze the site-specific 2'-hydroxyl methylation of ribose moieties in rRNA and tRNA. Site specificity is provided by a guide RNA that base pairs with the substrate. Methylation occurs at a characteristic distance from the sequence involved in base pairing with the guide RNA. The protein is Fibrillarin-like rRNA/tRNA 2'-O-methyltransferase of Thermoplasma acidophilum (strain ATCC 25905 / DSM 1728 / JCM 9062 / NBRC 15155 / AMRC-C165).